The chain runs to 259 residues: Thiazole synthase (259 aa).

Lys-95 serves as the catalytic Schiff-base intermediate with DXP. Residues Gly-156, Ala-183–Gly-184, and Asn-205–Ser-206 contribute to the 1-deoxy-D-xylulose 5-phosphate site.

Belongs to the ThiG family. In terms of assembly, homotetramer. Forms heterodimers with either ThiH or ThiS.

The protein localises to the cytoplasm. The catalysed reaction is [ThiS sulfur-carrier protein]-C-terminal-Gly-aminoethanethioate + 2-iminoacetate + 1-deoxy-D-xylulose 5-phosphate = [ThiS sulfur-carrier protein]-C-terminal Gly-Gly + 2-[(2R,5Z)-2-carboxy-4-methylthiazol-5(2H)-ylidene]ethyl phosphate + 2 H2O + H(+). The protein operates within cofactor biosynthesis; thiamine diphosphate biosynthesis. Catalyzes the rearrangement of 1-deoxy-D-xylulose 5-phosphate (DXP) to produce the thiazole phosphate moiety of thiamine. Sulfur is provided by the thiocarboxylate moiety of the carrier protein ThiS. In vitro, sulfur can be provided by H(2)S. In Coxiella burnetii (strain RSA 331 / Henzerling II), this protein is Thiazole synthase.